Reading from the N-terminus, the 139-residue chain is Large ribosomal subunit protein uL16c (139 aa).

This sequence belongs to the universal ribosomal protein uL16 family. In terms of assembly, part of the 50S ribosomal subunit.

It localises to the plastid. It is found in the chloroplast. This Cryptomeria japonica (Japanese cedar) protein is Large ribosomal subunit protein uL16c.